The sequence spans 284 residues: Nucleoid occlusion protein (284 aa).

The segment at residues E143–L162 is a DNA-binding region (H-T-H motif).

The protein belongs to the ParB family.

The protein resides in the cytoplasm. It is found in the nucleoid. Effects nucleoid occlusion by binding relatively nonspecifically to DNA and preventing the assembly of the division machinery in the vicinity of the nucleoid, especially under conditions that disturb the cell cycle. It helps to coordinate cell division and chromosome segregation by preventing the formation of the Z ring through the nucleoid, which would cause chromosome breakage. In Listeria monocytogenes serotype 4b (strain CLIP80459), this protein is Nucleoid occlusion protein.